The sequence spans 190 residues: Dynein axonemal light chain 1 (190 aa).

Residue Ala-2 is modified to N-acetylalanine. LRR repeat units lie at residues 47 to 69 (LANC…LNGL), 70 to 93 (KNLR…AVGD), 95 to 114 (LEEL…IHVM), and 115 to 138 (RKLK…KLAE). Ser-56 carries the phosphoserine modification.

This sequence belongs to the dynein light chain LC1-type family. Interacts with ZMYND10 (via C-terminus). Interacts with DNAH5, a outer arm dynein heavy chain. Interacts with tubulin located within the A-tubule of the outer doublets in a ATP-independent manner.

The protein resides in the cytoplasm. The protein localises to the cytoskeleton. Its subcellular location is the cilium axoneme. In terms of biological role, part of the multisubunit axonemal ATPase complexes that generate the force for cilia motility and govern beat frequency. Component of the outer arm dynein (ODA). May be involved in a mechanosensory feedback mechanism controlling ODA activity based on external conformational cues by tethering the outer arm dynein heavy chain (DNAH5) to the microtubule within the axoneme. Important for ciliary function in the airways and for the function of the cilia that produce the nodal flow essential for the determination of the left-right asymmetry. The chain is Dynein axonemal light chain 1 from Rattus norvegicus (Rat).